Reading from the N-terminus, the 83-residue chain is Three-finger toxin W-IV (83 aa).

An N-terminal signal peptide occupies residues 1 to 21 (MKTLLLTLVVVTIVCLDLGHT). Intrachain disulfides connect Cys24-Cys45, Cys38-Cys62, Cys64-Cys75, and Cys76-Cys81.

The protein belongs to the three-finger toxin family. Short-chain subfamily. Type I alpha-neurotoxin sub-subfamily. In terms of tissue distribution, expressed by the venom gland.

The protein localises to the secreted. Its function is as follows. Binds to muscle nicotinic acetylcholine receptor (nAChR) and inhibit acetylcholine from binding to the receptor, thereby impairing neuromuscular transmission. The polypeptide is Three-finger toxin W-IV (Walterinnesia aegyptia (Desert black snake)).